The sequence spans 595 residues: Quinoprotein alcohol dehydrogenase PedH (595 aa).

The first 27 residues, 1 to 27, serve as a signal peptide directing secretion; sequence MTRSPRRPLFAVSLVLSAMLLAGAAHA. Glutamine 87 serves as a coordination point for pyrroloquinoline quinone. A disulfide bridge links cysteine 131 with cysteine 132. Arginine 137, serine 181, glycine 197, and glycine 198 together coordinate pyrroloquinoline quinone. Glutamate 199 serves as a coordination point for Pr(3+). Tryptophan 263 provides a ligand contact to pyrroloquinoline quinone. 3 residues coordinate Pr(3+): asparagine 281, aspartate 323, and aspartate 325. Aspartate 323 serves as the catalytic Proton acceptor. Residues arginine 350, asparagine 417, tryptophan 493, and alanine 557 each contribute to the pyrroloquinoline quinone site.

This sequence belongs to the bacterial PQQ dehydrogenase family. Pr(3+) is required as a cofactor. Requires Nd(3+) as cofactor. The cofactor is La(3+). Ce(3+) serves as cofactor. It depends on Sm(3+) as a cofactor. Pyrroloquinoline quinone is required as a cofactor. Post-translationally, the disulfide ring formed between the two adjacent cysteine residues Cys-131 and Cys-132 is essential for efficient electron transfer at pH 7 from PedH to its natural electron acceptor cytochrome c550.

The protein localises to the periplasm. The enzyme catalyses a primary alcohol + 2 Fe(III)-[cytochrome c] = an aldehyde + 2 Fe(II)-[cytochrome c] + 2 H(+). It catalyses the reaction ethanol + 2 Fe(III)-[cytochrome c] = acetaldehyde + 2 Fe(II)-[cytochrome c] + 2 H(+). It carries out the reaction butan-1-ol + 2 Fe(III)-[cytochrome c] = butanal + 2 Fe(II)-[cytochrome c] + 2 H(+). The catalysed reaction is butan-2-ol + 2 Fe(III)-[cytochrome c] = butan-2-one + 2 Fe(II)-[cytochrome c] + 2 H(+). The enzyme catalyses 2-phenylethanol + 2 Fe(III)-[cytochrome c] = 2-phenylacetaldehyde + 2 Fe(II)-[cytochrome c] + 2 H(+). It catalyses the reaction octan-1-ol + 2 Fe(III)-[cytochrome c] = octanal + 2 Fe(II)-[cytochrome c] + 2 H(+). It carries out the reaction hexan-1-ol + 2 Fe(III)-[cytochrome c] = hexanal + 2 Fe(II)-[cytochrome c] + 2 H(+). The catalysed reaction is cinnamyl alcohol + 2 Fe(III)-[cytochrome c] = cinnamaldehyde + 2 Fe(II)-[cytochrome c] + 2 H(+). The enzyme catalyses farnesol + 2 Fe(III)-[cytochrome c] = farnesal + 2 Fe(II)-[cytochrome c] + 2 H(+). It catalyses the reaction an aldehyde + 2 Fe(III)-[cytochrome c] + H2O = a carboxylate + 2 Fe(II)-[cytochrome c] + 3 H(+). It carries out the reaction acetaldehyde + 2 Fe(III)-[cytochrome c] + H2O = 2 Fe(II)-[cytochrome c] + acetate + 3 H(+). The catalysed reaction is butanal + 2 Fe(III)-[cytochrome c] + H2O = butanoate + 2 Fe(II)-[cytochrome c] + 3 H(+). The enzyme catalyses hexanal + 2 Fe(III)-[cytochrome c] + H2O = hexanoate + 2 Fe(II)-[cytochrome c] + 3 H(+). It catalyses the reaction octanal + 2 Fe(III)-[cytochrome c] + H2O = octanoate + 2 Fe(II)-[cytochrome c] + 3 H(+). Functionally, alcohol dehydrogenase that catalyzes the oxidation of a range of substrates, including linear and aromatic primary and secondary alcohols, as well as aldehydes, but only in the presence of lanthanides, allowing bacterial growth with a variety of volatile organic compounds (VOCs) as carbon and energy sources. Is also involved in the transcriptional regulation of pedE and pedH, most likely acting as a lanthanide sensory module. Uses a specific inducible cytochrome c550, encoded by the adjacent gene in the locus, as electron acceptor. In Pseudomonas putida (strain ATCC 47054 / DSM 6125 / CFBP 8728 / NCIMB 11950 / KT2440), this protein is Quinoprotein alcohol dehydrogenase PedH.